Here is a 207-residue protein sequence, read N- to C-terminus: Nuclear transcription factor Y subunit beta (207 aa).

Residues 1 to 52 (MTMDGDSSTTDASQLGISADYIGGSHYVIQPHDDTEDSMNDHEDTNGSKESF) form an a domain region. Residues 27 to 52 (YVIQPHDDTEDSMNDHEDTNGSKESF) are disordered. The span at 39–52 (MNDHEDTNGSKESF) shows a compositional bias: basic and acidic residues. A b domain region spans residues 53-142 (REQDIYLPIA…PLKLYLQKFR (90 aa)). A DNA-binding region spans residues 59–65 (LPIANVA). Residues 86–97 (VQECVSEFISFI) are subunit association domain (SAD). A Glycyl lysine isopeptide (Lys-Gly) (interchain with G-Cter in ubiquitin) cross-link involves residue lysine 140. Residues 143 to 207 (EAMKGEKGIG…ISGVQQIQFS (65 aa)) are c domain.

It belongs to the NFYB/HAP3 subunit family. As to quaternary structure, heterotrimeric transcription factor composed of three components, NF-YA, NF-YB and NF-YC. NF-YB and NF-YC must interact and dimerize for NF-YA association and DNA binding. Interacts with C1QBP. Monoubiquitination at Lys-140 plays an important role in transcriptional activation by allowing the deposition of histone H3 methylations as well as histone H2B monoubiquitination at 'Lys-121'.

It localises to the nucleus. Its function is as follows. Component of the sequence-specific heterotrimeric transcription factor (NF-Y) which specifically recognizes a 5'-CCAAT-3' box motif found in the promoters of its target genes. NF-Y can function as both an activator and a repressor, depending on its interacting cofactors. The polypeptide is Nuclear transcription factor Y subunit beta (Nfyb) (Mus musculus (Mouse)).